The sequence spans 183 residues: Gamma-crystallin N (183 aa).

4 consecutive Beta/gamma crystallin 'Greek key' domains span residues 6–46 (GKII…RVET), 47–89 (GAWI…KPVR), 95–136 (YRLE…KVYG), and 138–180 (GAWV…RRVV).

This sequence belongs to the beta/gamma-crystallin family. Monomer.

Crystallins are the dominant structural components of the vertebrate eye lens. The sequence is that of Gamma-crystallin N (crygn) from Xenopus tropicalis (Western clawed frog).